A 430-amino-acid chain; its full sequence is Aspartate aminotransferase, mitochondrial (430 aa).

A mitochondrion-targeting transit peptide spans 1-29; sequence MALLHSGRVLSGVASAFHPGLAAAASARA. Phosphothreonine is present on Thr48. The residue at position 59 (Lys59) is an N6-acetyllysine. Gly65 contributes to the substrate binding site. N6-acetyllysine; alternate is present on Lys73. An N6-succinyllysine; alternate modification is found at Lys73. An N6-acetyllysine modification is found at Lys82. Position 90 is an N6-acetyllysine; alternate (Lys90). N6-succinyllysine; alternate is present on Lys90. At Tyr96 the chain carries 3'-nitrotyrosine; alternate. A Phosphotyrosine; alternate modification is found at Tyr96. Lys107, Lys122, and Lys159 each carry N6-acetyllysine; alternate. Residues Lys107, Lys122, and Lys159 each carry the N6-succinyllysine; alternate modification. Position 162 (Trp162) interacts with substrate. Residue Lys185 is modified to N6-acetyllysine; alternate. Lys185 bears the N6-succinyllysine; alternate mark. Substrate is bound at residue Asn215. An N6-succinyllysine modification is found at Lys227. Position 234 is an N6-acetyllysine (Lys234). Residues Lys279 and Lys296 each carry the N6-acetyllysine; alternate modification. The residue at position 279 (Lys279) is an N6-(pyridoxal phosphate)lysine; alternate. At Lys296 the chain carries N6-succinyllysine; alternate. Lys302 bears the N6-acetyllysine mark. Position 309 is an N6-acetyllysine; alternate (Lys309). Lys309 carries the post-translational modification N6-succinyllysine; alternate. Arg313 is modified (asymmetric dimethylarginine). Position 345 is an N6-acetyllysine (Lys345). Lys363 bears the N6-acetyllysine; alternate mark. Lys363 carries the N6-succinyllysine; alternate modification. N6-acetyllysine is present on residues Lys364 and Lys387. N6-acetyllysine; alternate occurs at positions 396 and 404. Residues Lys396 and Lys404 each carry the N6-succinyllysine; alternate modification. Arg407 serves as a coordination point for substrate.

Belongs to the class-I pyridoxal-phosphate-dependent aminotransferase family. In terms of assembly, homodimer. Requires pyridoxal 5'-phosphate as cofactor.

The protein localises to the mitochondrion matrix. The protein resides in the cell membrane. It catalyses the reaction L-aspartate + 2-oxoglutarate = oxaloacetate + L-glutamate. The catalysed reaction is L-kynurenine + 2-oxoglutarate = kynurenate + L-glutamate + H2O. Functionally, catalyzes the irreversible transamination of the L-tryptophan metabolite L-kynurenine to form kynurenic acid (KA). As a member of the malate-aspartate shuttle, it has a key role in the intracellular NAD(H) redox balance. Is important for metabolite exchange between mitochondria and cytosol, and for amino acid metabolism. Facilitates cellular uptake of long-chain free fatty acids. In Sus scrofa (Pig), this protein is Aspartate aminotransferase, mitochondrial (GOT2).